The chain runs to 230 residues: MKIAVTKFLGTNCDLDVCHAVKLAGGEPELVFFTQENLDSYKGAVIPGGFSYGDYLRAGAISARTPIIKGLKKMVEEGKPVLGICNGAQIGLEAGFSKGTLTNNLNAKFICKWVYIRVENNKTPFTQYYKKGEVLKIPIAHAEGRFYADDETLDYMYKNNMIVFKYCDETGEVTEEANPNGSIDNIAGVCNENQNCVLLMPHPERASEKILGSDDGLKMFKGMIDYAKRI.

Residues 2–230 (KIAVTKFLGT…KGMIDYAKRI (229 aa)) enclose the Glutamine amidotransferase type-1 domain. Cys-85 acts as the Nucleophile in catalysis. Catalysis depends on residues His-202 and Glu-204.

In terms of assembly, part of the FGAM synthase complex composed of 1 PurL, 1 PurQ and 2 PurS subunits.

The protein resides in the cytoplasm. The enzyme catalyses N(2)-formyl-N(1)-(5-phospho-beta-D-ribosyl)glycinamide + L-glutamine + ATP + H2O = 2-formamido-N(1)-(5-O-phospho-beta-D-ribosyl)acetamidine + L-glutamate + ADP + phosphate + H(+). It catalyses the reaction L-glutamine + H2O = L-glutamate + NH4(+). It participates in purine metabolism; IMP biosynthesis via de novo pathway; 5-amino-1-(5-phospho-D-ribosyl)imidazole from N(2)-formyl-N(1)-(5-phospho-D-ribosyl)glycinamide: step 1/2. In terms of biological role, part of the phosphoribosylformylglycinamidine synthase complex involved in the purines biosynthetic pathway. Catalyzes the ATP-dependent conversion of formylglycinamide ribonucleotide (FGAR) and glutamine to yield formylglycinamidine ribonucleotide (FGAM) and glutamate. The FGAM synthase complex is composed of three subunits. PurQ produces an ammonia molecule by converting glutamine to glutamate. PurL transfers the ammonia molecule to FGAR to form FGAM in an ATP-dependent manner. PurS interacts with PurQ and PurL and is thought to assist in the transfer of the ammonia molecule from PurQ to PurL. The chain is Phosphoribosylformylglycinamidine synthase subunit PurQ from Methanocaldococcus jannaschii (strain ATCC 43067 / DSM 2661 / JAL-1 / JCM 10045 / NBRC 100440) (Methanococcus jannaschii).